The chain runs to 160 residues: SsrA-binding protein (160 aa).

The protein belongs to the SmpB family.

The protein resides in the cytoplasm. Its function is as follows. Required for rescue of stalled ribosomes mediated by trans-translation. Binds to transfer-messenger RNA (tmRNA), required for stable association of tmRNA with ribosomes. tmRNA and SmpB together mimic tRNA shape, replacing the anticodon stem-loop with SmpB. tmRNA is encoded by the ssrA gene; the 2 termini fold to resemble tRNA(Ala) and it encodes a 'tag peptide', a short internal open reading frame. During trans-translation Ala-aminoacylated tmRNA acts like a tRNA, entering the A-site of stalled ribosomes, displacing the stalled mRNA. The ribosome then switches to translate the ORF on the tmRNA; the nascent peptide is terminated with the 'tag peptide' encoded by the tmRNA and targeted for degradation. The ribosome is freed to recommence translation, which seems to be the essential function of trans-translation. The protein is SsrA-binding protein of Citrobacter koseri (strain ATCC BAA-895 / CDC 4225-83 / SGSC4696).